The following is a 634-amino-acid chain: MLSSCRAVTSMSRWSKHKKTKEVISMLSHNQKPNSWKILWRLIKSVQGRTSSKVLYVMVCAIFGILTGVTNSILLAQGLGFIFPTTNTETDGIQSVYLLVFAHNLPVMERLTIVCVTVVVAYILIFSFNVAQNYLGLKLYQEICALLRWKAYLKIQSMSTSFFDTQNNGDLMSRLTNDVYNINNLYAQVGGQTIQSLFILMTTATILFVLSPVIALISLTVLIALIALSFLFLKKARAAYAKVQNNLGDMSGYIEEVLSNHKVVHVLKLQEVMIDNFDKYNRPMVNPTIKANTYAVFIYSWFGFISNITYLASISIATAFSVNNIPSFGVSAINYSFMLSYIAALRQTALPLNQIFSLWNLIQLGIVSGERVFKILDLESPQKQATITKLPNIKGNIRFEKVVFGYSADKPILTGIDFSVKHGDIVAIVGPTGAGKSTIINLLMKFYKPFAGKIYMDNFEISEVSETAWREKISIVLQDPFLFSGTIKENIRMGRQDATDEEIIEACKVANAHDFIMRLPQGYNTFISNKTDYLSVGERQLLTIARAVIRNAPVLLLDEATSSIDVHSEKLIQQSIGRLMKDKTSFIISHRLSIIRNATLIIVINDGKVLEMGNHEQLMRQNGFYARLKRSAVK.

6 helical membrane-spanning segments follow: residues 54-74 (VLYVMVCAIFGILTGVTNSIL), 111-131 (LTIVCVTVVVAYILIFSFNVA), 189-209 (VGGQTIQSLFILMTTATILFV), 213-233 (VIALISLTVLIALIALSFLFL), 296-316 (VFIYSWFGFISNITYLASISI), and 325-345 (IPSFGVSAINYSFMLSYIAAL). One can recognise an ABC transmembrane type-1 domain in the interval 54 to 364 (VLYVMVCAIF…IFSLWNLIQL (311 aa)). Residues 397–631 (IRFEKVVFGY…NGFYARLKRS (235 aa)) form the ABC transporter domain. 430–437 (GPTGAGKS) contributes to the ATP binding site.

This sequence belongs to the ABC transporter superfamily.

It localises to the cell membrane. The chain is Putative ABC transporter ATP-binding protein MG015 homolog from Mycoplasma pneumoniae (strain ATCC 29342 / M129 / Subtype 1) (Mycoplasmoides pneumoniae).